The following is a 294-amino-acid chain: Bifunctional protein FolD 1 (294 aa).

Residues 165–167, S190, and T231 contribute to the NADP(+) site; that span reads GRS.

The protein belongs to the tetrahydrofolate dehydrogenase/cyclohydrolase family. Homodimer.

It catalyses the reaction (6R)-5,10-methylene-5,6,7,8-tetrahydrofolate + NADP(+) = (6R)-5,10-methenyltetrahydrofolate + NADPH. It carries out the reaction (6R)-5,10-methenyltetrahydrofolate + H2O = (6R)-10-formyltetrahydrofolate + H(+). It functions in the pathway one-carbon metabolism; tetrahydrofolate interconversion. Functionally, catalyzes the oxidation of 5,10-methylenetetrahydrofolate to 5,10-methenyltetrahydrofolate and then the hydrolysis of 5,10-methenyltetrahydrofolate to 10-formyltetrahydrofolate. This is Bifunctional protein FolD 1 from Paenarthrobacter aurescens (strain TC1).